The sequence spans 287 residues: Bifunctional protein FolD (287 aa).

NADP(+) contacts are provided by residues 160 to 162 (GRS), Ser-189, and Thr-230.

This sequence belongs to the tetrahydrofolate dehydrogenase/cyclohydrolase family. Homodimer.

The enzyme catalyses (6R)-5,10-methylene-5,6,7,8-tetrahydrofolate + NADP(+) = (6R)-5,10-methenyltetrahydrofolate + NADPH. It carries out the reaction (6R)-5,10-methenyltetrahydrofolate + H2O = (6R)-10-formyltetrahydrofolate + H(+). Its pathway is one-carbon metabolism; tetrahydrofolate interconversion. Catalyzes the oxidation of 5,10-methylenetetrahydrofolate to 5,10-methenyltetrahydrofolate and then the hydrolysis of 5,10-methenyltetrahydrofolate to 10-formyltetrahydrofolate. The sequence is that of Bifunctional protein FolD from Chlamydia trachomatis serovar D (strain ATCC VR-885 / DSM 19411 / UW-3/Cx).